The chain runs to 328 residues: Malate dehydrogenase (328 aa).

Residue 12-18 (GAAGQIG) coordinates NAD(+). Substrate-binding residues include Arg93 and Arg99. Residues Asn106, Gln113, and 130–132 (VGN) contribute to the NAD(+) site. The substrate site is built by Asn132 and Arg163. The active-site Proton acceptor is the His188.

Belongs to the LDH/MDH superfamily. MDH type 2 family.

The enzyme catalyses (S)-malate + NAD(+) = oxaloacetate + NADH + H(+). Functionally, catalyzes the reversible oxidation of malate to oxaloacetate. This is Malate dehydrogenase from Saccharopolyspora erythraea (strain ATCC 11635 / DSM 40517 / JCM 4748 / NBRC 13426 / NCIMB 8594 / NRRL 2338).